The following is a 448-amino-acid chain: Methionine aminopeptidase 2-1 (448 aa).

The segment at 1–90 is disordered; sequence MAAQASEKLE…PPRVPVSSLF (90 aa). A compositionally biased stretch (low complexity) spans 22-33; sequence AAGPAKAGQADA. Acidic residues predominate over residues 34-46; the sequence is GEVEDESDDDADD. Positions 47–58 are enriched in low complexity; the sequence is AGAAADGAANGA. Over residues 59 to 74 the composition is skewed to basic residues; it reads AKKKKKRKSKKKKKGG. The span at 75–88 shows a compositional bias: low complexity; that stretch reads AKVQSSPPRVPVSS. H198 is a substrate binding site. 3 residues coordinate a divalent metal cation: D218, D229, and H301. H309 contributes to the substrate binding site. A divalent metal cation-binding residues include E334 and E429.

This sequence belongs to the peptidase M24A family. Methionine aminopeptidase eukaryotic type 2 subfamily. The cofactor is Co(2+). Zn(2+) is required as a cofactor. It depends on Mn(2+) as a cofactor. Fe(2+) serves as cofactor.

The protein localises to the cytoplasm. The enzyme catalyses Release of N-terminal amino acids, preferentially methionine, from peptides and arylamides.. Its function is as follows. Cotranslationally removes the N-terminal methionine from nascent proteins. The N-terminal methionine is often cleaved when the second residue in the primary sequence is small and uncharged (Met-Ala-, Cys, Gly, Pro, Ser, Thr, or Val). The sequence is that of Methionine aminopeptidase 2-1 from Emericella nidulans (strain FGSC A4 / ATCC 38163 / CBS 112.46 / NRRL 194 / M139) (Aspergillus nidulans).